A 67-amino-acid chain; its full sequence is Phycobilisome 7.8 kDa linker polypeptide, allophycocyanin-associated, core (67 aa).

The 56-residue stretch at 1–56 (MRVFKVTACVPSQTRIRTQRELQNTYFTKLVPYDNWFREQQRIMKMGGKIVKVELA) folds into the CpcD-like domain.

It belongs to the phycobilisome linker protein family.

It localises to the cellular thylakoid membrane. Its function is as follows. Rod linker protein, associated with allophycocyanin. Linker polypeptides determine the state of aggregation and the location of the disk-shaped phycobiliprotein units within the phycobilisome and modulate their spectroscopic properties in order to mediate a directed and optimal energy transfer. This Arthrospira platensis (Spirulina platensis) protein is Phycobilisome 7.8 kDa linker polypeptide, allophycocyanin-associated, core (apcC).